Here is a 499-residue protein sequence, read N- to C-terminus: Phenylalanine--tRNA ligase alpha subunit (499 aa).

L-phenylalanine-binding positions include T342, 381-383 (QID), and F422. E424 is a Mg(2+) binding site. F447 provides a ligand contact to L-phenylalanine.

Belongs to the class-II aminoacyl-tRNA synthetase family. Phe-tRNA synthetase alpha subunit type 2 subfamily. As to quaternary structure, tetramer of two alpha and two beta subunits. It depends on Mg(2+) as a cofactor.

The protein resides in the cytoplasm. The enzyme catalyses tRNA(Phe) + L-phenylalanine + ATP = L-phenylalanyl-tRNA(Phe) + AMP + diphosphate + H(+). The sequence is that of Phenylalanine--tRNA ligase alpha subunit from Pyrococcus furiosus (strain ATCC 43587 / DSM 3638 / JCM 8422 / Vc1).